The chain runs to 184 residues: Peptide deformylase (184 aa).

Cys98 and His140 together coordinate Fe cation. Residue Glu141 is part of the active site. His144 is a binding site for Fe cation.

Belongs to the polypeptide deformylase family. The cofactor is Fe(2+).

The catalysed reaction is N-terminal N-formyl-L-methionyl-[peptide] + H2O = N-terminal L-methionyl-[peptide] + formate. Removes the formyl group from the N-terminal Met of newly synthesized proteins. Requires at least a dipeptide for an efficient rate of reaction. N-terminal L-methionine is a prerequisite for activity but the enzyme has broad specificity at other positions. In Phocaeicola vulgatus (strain ATCC 8482 / DSM 1447 / JCM 5826 / CCUG 4940 / NBRC 14291 / NCTC 11154) (Bacteroides vulgatus), this protein is Peptide deformylase.